Reading from the N-terminus, the 542-residue chain is Chaperonin GroEL 2 (542 aa).

ATP-binding positions include 30 to 33 (TLGP), Lys51, 87 to 91 (DGTTT), Gly415, and Asp496.

This sequence belongs to the chaperonin (HSP60) family. Forms a cylinder of 14 subunits composed of two heptameric rings stacked back-to-back. Interacts with the co-chaperonin GroES.

It localises to the cytoplasm. It catalyses the reaction ATP + H2O + a folded polypeptide = ADP + phosphate + an unfolded polypeptide.. Its function is as follows. Together with its co-chaperonin GroES, plays an essential role in assisting protein folding. The GroEL-GroES system forms a nano-cage that allows encapsulation of the non-native substrate proteins and provides a physical environment optimized to promote and accelerate protein folding. This chain is Chaperonin GroEL 2, found in Rhizobium meliloti (strain 1021) (Ensifer meliloti).